A 179-amino-acid chain; its full sequence is Putative cleavage and polyadenylation specificity factor subunit 4-like protein (179 aa).

C3H1-type zinc fingers lie at residues K35 to R61, G62 to D89, L90 to P117, A118 to R145, and I146 to R169.

Belongs to the CPSF4/YTH1 family.

This Homo sapiens (Human) protein is Putative cleavage and polyadenylation specificity factor subunit 4-like protein (CPSF4L).